The sequence spans 93 residues: DNA-directed RNA polymerase subunit omega (93 aa).

Belongs to the RNA polymerase subunit omega family. As to quaternary structure, the RNAP catalytic core consists of 2 alpha, 1 beta, 1 beta' and 1 omega subunit. When a sigma factor is associated with the core the holoenzyme is formed, which can initiate transcription.

The catalysed reaction is RNA(n) + a ribonucleoside 5'-triphosphate = RNA(n+1) + diphosphate. Functionally, promotes RNA polymerase assembly. Latches the N- and C-terminal regions of the beta' subunit thereby facilitating its interaction with the beta and alpha subunits. The chain is DNA-directed RNA polymerase subunit omega from Corynebacterium urealyticum (strain ATCC 43042 / DSM 7109).